The chain runs to 142 residues: Large ribosomal subunit protein uL13 (142 aa).

It belongs to the universal ribosomal protein uL13 family. In terms of assembly, part of the 50S ribosomal subunit.

In terms of biological role, this protein is one of the early assembly proteins of the 50S ribosomal subunit, although it is not seen to bind rRNA by itself. It is important during the early stages of 50S assembly. In Pelobacter propionicus (strain DSM 2379 / NBRC 103807 / OttBd1), this protein is Large ribosomal subunit protein uL13.